A 141-amino-acid polypeptide reads, in one-letter code: Nucleoside diphosphate kinase (141 aa).

ATP is bound by residues lysine 11, phenylalanine 59, arginine 87, threonine 93, arginine 104, and asparagine 114. Catalysis depends on histidine 117, which acts as the Pros-phosphohistidine intermediate.

This sequence belongs to the NDK family. As to quaternary structure, homotetramer. It depends on Mg(2+) as a cofactor.

The protein localises to the cytoplasm. The catalysed reaction is a 2'-deoxyribonucleoside 5'-diphosphate + ATP = a 2'-deoxyribonucleoside 5'-triphosphate + ADP. The enzyme catalyses a ribonucleoside 5'-diphosphate + ATP = a ribonucleoside 5'-triphosphate + ADP. Functionally, major role in the synthesis of nucleoside triphosphates other than ATP. The ATP gamma phosphate is transferred to the NDP beta phosphate via a ping-pong mechanism, using a phosphorylated active-site intermediate. The protein is Nucleoside diphosphate kinase of Pseudomonas syringae pv. tomato (strain ATCC BAA-871 / DC3000).